The chain runs to 38 residues: Cytochrome b6-f complex subunit 5 (38 aa).

The chain crosses the membrane as a helical span at residues 5-25 (LLCGIVLGLIPVTLLGLFVDA).

The protein belongs to the PetG family. The 4 large subunits of the cytochrome b6-f complex are cytochrome b6, subunit IV (17 kDa polypeptide, PetD), cytochrome f and the Rieske protein, while the 4 small subunits are PetG, PetL, PetM and PetN. The complex functions as a dimer.

It is found in the cellular thylakoid membrane. Its function is as follows. Component of the cytochrome b6-f complex, which mediates electron transfer between photosystem II (PSII) and photosystem I (PSI), cyclic electron flow around PSI, and state transitions. PetG is required for either the stability or assembly of the cytochrome b6-f complex. In Prochlorococcus marinus (strain MIT 9313), this protein is Cytochrome b6-f complex subunit 5.